A 179-amino-acid chain; its full sequence is Large ribosomal subunit protein uL5 (179 aa).

The protein belongs to the universal ribosomal protein uL5 family. As to quaternary structure, part of the 50S ribosomal subunit; part of the 5S rRNA/L5/L18/L25 subcomplex. Contacts the 5S rRNA and the P site tRNA. Forms a bridge to the 30S subunit in the 70S ribosome.

In terms of biological role, this is one of the proteins that bind and probably mediate the attachment of the 5S RNA into the large ribosomal subunit, where it forms part of the central protuberance. In the 70S ribosome it contacts protein S13 of the 30S subunit (bridge B1b), connecting the 2 subunits; this bridge is implicated in subunit movement. Contacts the P site tRNA; the 5S rRNA and some of its associated proteins might help stabilize positioning of ribosome-bound tRNAs. In Shewanella loihica (strain ATCC BAA-1088 / PV-4), this protein is Large ribosomal subunit protein uL5.